The following is a 63-amino-acid chain: MKANELREKSAQQLNEQLLGLLRDQFNLRMQKATGQLGQSHLLSQVKRDIARVKTVLNQQAGK.

It belongs to the universal ribosomal protein uL29 family.

The polypeptide is Large ribosomal subunit protein uL29 (Pseudomonas fluorescens (strain ATCC BAA-477 / NRRL B-23932 / Pf-5)).